A 187-amino-acid polypeptide reads, in one-letter code: UPF0301 protein Sputcn32_2681 (187 aa).

This sequence belongs to the UPF0301 (AlgH) family.

This Shewanella putrefaciens (strain CN-32 / ATCC BAA-453) protein is UPF0301 protein Sputcn32_2681.